A 500-amino-acid polypeptide reads, in one-letter code: Cytochrome P450 81F1 (500 aa).

The chain crosses the membrane as a helical span at residues 1–21; that stretch reads MLYFILLPLLFLVISYKFLYS. A Glycyl lysine isopeptide (Lys-Gly) (interchain with G-Cter in ubiquitin) cross-link involves residue Lys-248. Position 438 (Cys-438) interacts with heme.

Belongs to the cytochrome P450 family. Heme serves as cofactor.

It localises to the membrane. Its pathway is secondary metabolite biosynthesis. Its function is as follows. Involved in indole glucosinolate biosynthesis. Catalyzes hydroxylation reactions of the glucosinolate indole ring. Converts indol-3-yl-methylglucosinolate (I3M) to 4-hydroxy-indol-3-yl-methylglucosinolate (4OH-I3M) and/or 1-hydroxy-indol-3-yl-methylglucosinolate (1OH-I3M) intermediates. These hydroxy intermediates are converted to 4-methoxy-indol-3-yl-methylglucosinolate (4MO-I3M) and 1-methoxy-indol-3-yl-methylglucosinolate (1MO-I3M) by indole glucosinolate methyltransferase 1 and 2 (IGMT1 and IGMT2). The polypeptide is Cytochrome P450 81F1 (Arabidopsis thaliana (Mouse-ear cress)).